Consider the following 274-residue polypeptide: Protein TIC 20-I, chloroplastic (274 aa).

Residues 1–65 (MITGYSTPSA…ELPRVSRGVP (65 aa)) constitute a chloroplast transit peptide. A run of 4 helical transmembrane segments spans residues 130–152 (LPYLMPLHETWMYAETAYHLHPF), 167–187 (IGRLPSWFLMAYFFVAYLGIV), 200–220 (VVMGMLLEIALQVIGTVSKWM), and 229–249 (FGMHFWTAVAFAYLFTVLESI).

This sequence belongs to the Tic20 family. In terms of assembly, part of the Tic complex. Component of the 1-MD complex, composed of TIC20-I, TIC214, TIC100 and TIC56. Interacts with the translocating preproteins. Hydrolysis of ATP is essential for the formation of this complex. The 1-MD complex interacts with TIC21. In terms of tissue distribution, expressed in leaves, shoots and roots. High expression in mature photosynthetic tissues. Lower levels in non-photosynthetic tissues and roots.

The protein resides in the plastid. It localises to the chloroplast inner membrane. In terms of biological role, involved in protein precursor import into chloroplasts. May be part of an intermediate translocation complex acting as a protein-conducting channel at the inner envelope. Seems to be specific for photosynthesis-related pre-proteins. Partially redundant with TIC20-IV, but not with TIC20-II or TIC20-V. In Arabidopsis thaliana (Mouse-ear cress), this protein is Protein TIC 20-I, chloroplastic.